Here is a 1058-residue protein sequence, read N- to C-terminus: Lon protease homolog, mitochondrial (1058 aa).

The N-terminal 47 residues, 1–47 (MLTRIRNAGVGGNAARRVRLLAGYTGARMAHAAALNSTTGAGGAARA), are a transit peptide targeting the mitochondrion. Positions 72–151 (GGQCILKQDR…RSNPPSEGEV (80 aa)) are disordered. Basic and acidic residues-rich tracts occupy residues 78–97 (KQDR…RAEE) and 106–118 (DEEA…EEQA). A compositionally biased stretch (gly residues) spans 129–142 (GSGGSASSAGGGGR). In terms of domain architecture, Lon N-terminal spans 158-412 (LMVLPMSNRP…KALVFIKKEV (255 aa)). Residue 564-571 (GPPGVGKT) coordinates ATP. Residues 778–814 (TPKSAPAETNIEPENGKPDASAKPLTNNLPAPEPLNI) form a disordered region. The Lon proteolytic domain occupies 844 to 1030 (KTPAGVVMGL…DDVFNVLFGS (187 aa)). Active-site residues include Ser-936 and Lys-979.

It belongs to the peptidase S16 family. In terms of assembly, homohexamer or homoheptamer. Organized in a ring with a central cavity.

The protein localises to the mitochondrion matrix. It catalyses the reaction Hydrolysis of proteins in presence of ATP.. Its function is as follows. ATP-dependent serine protease that mediates the selective degradation of misfolded, unassembled or oxidatively damaged polypeptides as well as certain short-lived regulatory proteins in the mitochondrial matrix. May also have a chaperone function in the assembly of inner membrane protein complexes. Participates in the regulation of mitochondrial gene expression and in the maintenance of the integrity of the mitochondrial genome. Binds to mitochondrial DNA in a site-specific manner. The polypeptide is Lon protease homolog, mitochondrial (Eremothecium gossypii (strain ATCC 10895 / CBS 109.51 / FGSC 9923 / NRRL Y-1056) (Yeast)).